Reading from the N-terminus, the 265-residue chain is Phosphonates import ATP-binding protein PhnC (265 aa).

An ABC transporter domain is found at 18 to 262; it reads LVVEHLRKEY…HLKQIYGGEE (245 aa). ATP is bound at residue 51–58; the sequence is GPSGTGKS.

This sequence belongs to the ABC transporter superfamily. Phosphonates importer (TC 3.A.1.9.1) family. As to quaternary structure, the complex is composed of two ATP-binding proteins (PhnC), two transmembrane proteins (PhnE) and a solute-binding protein (PhnD).

Its subcellular location is the cell inner membrane. It catalyses the reaction phosphonate(out) + ATP + H2O = phosphonate(in) + ADP + phosphate + H(+). Part of the ABC transporter complex PhnCDE involved in phosphonates import. Responsible for energy coupling to the transport system. This is Phosphonates import ATP-binding protein PhnC from Nitratidesulfovibrio vulgaris (strain ATCC 29579 / DSM 644 / CCUG 34227 / NCIMB 8303 / VKM B-1760 / Hildenborough) (Desulfovibrio vulgaris).